The chain runs to 257 residues: tRNA (guanine-N(1)-)-methyltransferase (257 aa).

Residues Gly-117 and 137–142 (LGDFVL) contribute to the S-adenosyl-L-methionine site.

This sequence belongs to the RNA methyltransferase TrmD family. As to quaternary structure, homodimer.

The protein localises to the cytoplasm. It carries out the reaction guanosine(37) in tRNA + S-adenosyl-L-methionine = N(1)-methylguanosine(37) in tRNA + S-adenosyl-L-homocysteine + H(+). Functionally, specifically methylates guanosine-37 in various tRNAs. The protein is tRNA (guanine-N(1)-)-methyltransferase of Bordetella parapertussis (strain 12822 / ATCC BAA-587 / NCTC 13253).